The sequence spans 425 residues: Alpha-(1,3)-fucosyltransferase C (425 aa).

Residues 1–37 are Cytoplasmic-facing; that stretch reads MYLGRVHCSFEVPGLLSGRVGHMSMAVRSVRLACGPR. A helical; Signal-anchor for type II membrane protein transmembrane segment spans residues 38–58; it reads GALLLLLLVLLGVLVVLHKVT. Topologically, residues 59-425 are lumenal; sequence QSPLLNQNKI…SCRLQSRIRL (367 aa). Asparagine 187 and asparagine 230 each carry an N-linked (GlcNAc...) asparagine glycan.

It belongs to the glycosyltransferase 10 family.

Its subcellular location is the golgi apparatus. The protein resides in the golgi stack membrane. It participates in protein modification; protein glycosylation. The chain is Alpha-(1,3)-fucosyltransferase C (FucTC) from Drosophila melanogaster (Fruit fly).